The primary structure comprises 211 residues: ATP-dependent Clp protease proteolytic subunit (211 aa).

The active-site Nucleophile is the serine 114. Residue histidine 139 is part of the active site.

Belongs to the peptidase S14 family. As to quaternary structure, fourteen ClpP subunits assemble into 2 heptameric rings which stack back to back to give a disk-like structure with a central cavity, resembling the structure of eukaryotic proteasomes.

Its subcellular location is the cytoplasm. It catalyses the reaction Hydrolysis of proteins to small peptides in the presence of ATP and magnesium. alpha-casein is the usual test substrate. In the absence of ATP, only oligopeptides shorter than five residues are hydrolyzed (such as succinyl-Leu-Tyr-|-NHMec, and Leu-Tyr-Leu-|-Tyr-Trp, in which cleavage of the -Tyr-|-Leu- and -Tyr-|-Trp bonds also occurs).. In terms of biological role, cleaves peptides in various proteins in a process that requires ATP hydrolysis. Has a chymotrypsin-like activity. Plays a major role in the degradation of misfolded proteins. This is ATP-dependent Clp protease proteolytic subunit from Pseudomonas fluorescens (strain SBW25).